A 242-amino-acid polypeptide reads, in one-letter code: ATP synthase subunit a (242 aa).

6 consecutive transmembrane segments (helical) span residues 29-49, 84-104, 114-134, 140-160, 189-209, and 210-230; these read SAAY…LAFS, FVPV…FGMI, IIIT…VGFV, FLSL…MIII, VIAS…IPLM, and VILI…FTIL.

It belongs to the ATPase A chain family. F-type ATPases have 2 components, CF(1) - the catalytic core - and CF(0) - the membrane proton channel. CF(1) has five subunits: alpha(3), beta(3), gamma(1), delta(1), epsilon(1). CF(0) has three main subunits: a(1), b(2) and c(9-12). The alpha and beta chains form an alternating ring which encloses part of the gamma chain. CF(1) is attached to CF(0) by a central stalk formed by the gamma and epsilon chains, while a peripheral stalk is formed by the delta and b chains.

The protein resides in the cell inner membrane. In terms of biological role, key component of the proton channel; it plays a direct role in the translocation of protons across the membrane. The sequence is that of ATP synthase subunit a from Rickettsia bellii (strain RML369-C).